The following is a 601-amino-acid chain: Glutathione-regulated potassium-efflux system protein KefB (601 aa).

The next 13 helical transmembrane spans lie at 4–24 (SDFLLAGVLFLFAAVAAVPLA), 29–49 (IGAVLGYLLAGIAIGPWGLGF), 55–75 (EILHFSELGVVFLMFIIGLEL), 87–107 (IFGVGAAQVLLSAALLAGLLM), 115–135 (AAVVGGIGLAMSSTAMALQLM), 152–172 (VLLFQDLAVIPALALVPLLAG), 177–197 (HFDWMKVGMKVLAFVGMLIGG), 207–227 (FIAASGVREVFTAATLLLVLG), 230–250 (LFMDALGLSMALGTFIAGVLL), 268–288 (GLLLGLFFISVGMSLNLGVLY), 291–311 (LLWVVISVVVLVAVKILVLYL), 324–344 (MQFAGVLSQGGEFAFVLFSTA), and 356–376 (ALLLVTVTLSMMTTPLLMKLV). Residues 400-519 (KPQVIVVGFG…AGVTQFSRET (120 aa)) enclose the RCK N-terminal domain.

Belongs to the monovalent cation:proton antiporter 2 (CPA2) transporter (TC 2.A.37) family. KefB subfamily. As to quaternary structure, interacts with the regulatory subunit KefG.

Its subcellular location is the cell inner membrane. Its activity is regulated as follows. Activated by adducts between glutathione and electrophiles. Its function is as follows. Pore-forming subunit of a potassium efflux system that confers protection against electrophiles. Catalyzes K(+)/H(+) antiport. The protein is Glutathione-regulated potassium-efflux system protein KefB of Escherichia coli (strain K12).